The sequence spans 445 residues: MREIVHLQAGQCGNQIGAKFWEVISDEHGIDPTGTYHGDSDLQLERINVYYNEATGGKYVPRAVLVDLEPGTMDSVRSGPFGQIFRPDNFVFGQSGAGNNWAKGHYTEGAELVDSVLDVVRKEAESCDCLQGFQLTHSLGGGTGSGMGTLLISKIREEYPDRIMNTFSVVPSPKVSDTVVEPYNATLSVHQLVENTDETYCIDNEALYDICFRTLKLTTPTYGDLNHLVSATMSGVTTCLRFPGQLNADLRKLAVNMVPFPRLHFFMPGFAPLTSRGSQQYRALTVPELTQQMFDAKNMMAACDPRHGRYLTVAAVFRGRMSMKEVDEQMLNVQNKNSSYFVEWIPNNVKTAVCDIPPRGLKMSATFIGNSTAIQELFKRISEQFTAMFRRKAFLHWYTGEGMDEMEFTEAESNMNDLVSEYQQYQDATAEEEGEFEEEAEEEVA.

An MREI motif motif is present at residues 1–4; it reads MREI. Glutamine 11 is a GTP binding site. The residue at position 55 (threonine 55) is a Phosphothreonine. Lysine 58 bears the N6-acetyllysine mark. Residues glutamate 69, serine 138, glycine 142, threonine 143, and glycine 144 each contribute to the GTP site. Glutamate 69 contacts Mg(2+). Serine 172 is modified (phosphoserine; by CDK1). GTP-binding residues include asparagine 204 and asparagine 226. Residues 426–445 are disordered; that stretch reads QDATAEEEGEFEEEAEEEVA. The segment covering 429 to 445 has biased composition (acidic residues); the sequence is TAEEEGEFEEEAEEEVA. Position 438 is a 5-glutamyl polyglutamate (glutamate 438).

Belongs to the tubulin family. In terms of assembly, dimer of alpha and beta chains. A typical microtubule is a hollow water-filled tube with an outer diameter of 25 nm and an inner diameter of 15 nM. Alpha-beta heterodimers associate head-to-tail to form protofilaments running lengthwise along the microtubule wall with the beta-tubulin subunit facing the microtubule plus end conferring a structural polarity. Microtubules usually have 13 protofilaments but different protofilament numbers can be found in some organisms and specialized cells. Component of sperm flagellar doublet microtubules. It depends on Mg(2+) as a cofactor. Some glutamate residues at the C-terminus are polyglycylated, resulting in polyglycine chains on the gamma-carboxyl group. Glycylation is mainly limited to tubulin incorporated into axonemes (cilia and flagella) whereas glutamylation is prevalent in neuronal cells, centrioles, axonemes, and the mitotic spindle. Both modifications can coexist on the same protein on adjacent residues, and lowering polyglycylation levels increases polyglutamylation, and reciprocally. Cilia and flagella glycylation is required for their stability and maintenance. Flagella glycylation controls sperm motility. Post-translationally, some glutamate residues at the C-terminus are polyglutamylated, resulting in polyglutamate chains on the gamma-carboxyl group. Polyglutamylation plays a key role in microtubule severing by spastin (SPAST). SPAST preferentially recognizes and acts on microtubules decorated with short polyglutamate tails: severing activity by SPAST increases as the number of glutamates per tubulin rises from one to eight, but decreases beyond this glutamylation threshold. Glutamylation is also involved in cilia motility. In terms of processing, phosphorylated on Ser-172 by CDK1 during the cell cycle, from metaphase to telophase, but not in interphase. This phosphorylation inhibits tubulin incorporation into microtubules.

The protein resides in the cytoplasm. Its subcellular location is the cytoskeleton. It localises to the flagellum axoneme. Functionally, tubulin is the major constituent of microtubules, a cylinder consisting of laterally associated linear protofilaments composed of alpha- and beta-tubulin heterodimers. Microtubules grow by the addition of GTP-tubulin dimers to the microtubule end, where a stabilizing cap forms. Below the cap, tubulin dimers are in GDP-bound state, owing to GTPase activity of alpha-tubulin. The sequence is that of Tubulin beta-4B chain (TUBB4B) from Bos taurus (Bovine).